The chain runs to 353 residues: Methylthioribose-1-phosphate isomerase (353 aa).

Substrate contacts are provided by residues 51–53, Arg-94, and Gln-199; that span reads RGA. Asp-240 serves as the catalytic Proton donor. 250-251 contributes to the substrate binding site; the sequence is NK.

It belongs to the eIF-2B alpha/beta/delta subunits family. MtnA subfamily. As to quaternary structure, homodimer.

It catalyses the reaction 5-(methylsulfanyl)-alpha-D-ribose 1-phosphate = 5-(methylsulfanyl)-D-ribulose 1-phosphate. It functions in the pathway amino-acid biosynthesis; L-methionine biosynthesis via salvage pathway; L-methionine from S-methyl-5-thio-alpha-D-ribose 1-phosphate: step 1/6. Catalyzes the interconversion of methylthioribose-1-phosphate (MTR-1-P) into methylthioribulose-1-phosphate (MTRu-1-P). The protein is Methylthioribose-1-phosphate isomerase of Bacillus licheniformis (strain ATCC 14580 / DSM 13 / JCM 2505 / CCUG 7422 / NBRC 12200 / NCIMB 9375 / NCTC 10341 / NRRL NRS-1264 / Gibson 46).